Here is a 108-residue protein sequence, read N- to C-terminus: Vacuolar ATPase assembly integral membrane protein VMA21 (108 aa).

Residues 1 to 34 (MASRRSAAAKKEDFSFEAAATQSAHEAQEGFPSS) lie on the Cytoplasmic side of the membrane. A helical membrane pass occupies residues 35–55 (VIIKLVLVTVAMICAPLGTYF). Topologically, residues 56-68 (GTLNTICGGDSSY) are lumenal. A helical membrane pass occupies residues 69 to 89 (AGALAAISVNVVLIIYLIIAA). Topologically, residues 90 to 108 (REDTGESEEERKGKEGKEE) are cytoplasmic.

This sequence belongs to the VMA21 family.

The protein localises to the endoplasmic reticulum membrane. The protein resides in the endoplasmic reticulum-Golgi intermediate compartment membrane. Its subcellular location is the cytoplasmic vesicle. It is found in the COPII-coated vesicle membrane. In terms of biological role, required for the assembly of the V0 complex of the vacuolar ATPase (V-ATPase) in the endoplasmic reticulum. This is Vacuolar ATPase assembly integral membrane protein VMA21 from Ajellomyces capsulatus (strain NAm1 / WU24) (Darling's disease fungus).